Reading from the N-terminus, the 158-residue chain is MRKAKPKKRVILPDPVFNDQKVSKFVNHLMYDGKKNTSYEIFYAALETVKTKLPNEEKSALEIWKKALDNVTPQIEVKSRRVGGATFQVPTEIRPDRKESISMKNLILFARKRGGKSMADKLAAEIIDAFNEQGGAYKRKEDMHRMAEANRAFAHFRF.

Belongs to the universal ribosomal protein uS7 family. Part of the 30S ribosomal subunit. Contacts proteins S9 and S11.

Its function is as follows. One of the primary rRNA binding proteins, it binds directly to 16S rRNA where it nucleates assembly of the head domain of the 30S subunit. Is located at the subunit interface close to the decoding center, probably blocks exit of the E-site tRNA. This is Small ribosomal subunit protein uS7 from Phocaeicola vulgatus (strain ATCC 8482 / DSM 1447 / JCM 5826 / CCUG 4940 / NBRC 14291 / NCTC 11154) (Bacteroides vulgatus).